Consider the following 587-residue polypeptide: F-box/WD repeat-containing protein sel-10 (587 aa).

The segment covering 1–11 has biased composition (basic and acidic residues); that stretch reads MWPRNDVHMDD. Residues 1-53 form a disordered region; sequence MWPRNDVHMDDGSMTPEDQEPVTDNDMEYNDNGEESSYSNGSSSSYNADKLSS. Acidic residues predominate over residues 17-34; sequence EDQEPVTDNDMEYNDNGE. Positions 35–47 are enriched in low complexity; the sequence is ESSYSNGSSSSYN. The 47-residue stretch at 121–167 folds into the F-box domain; it reads RDFLSCLPVELGMKILHNLTGYDLLKVAQVSKNWKLISEIDKIWKSL. WD repeat units follow at residues 253–291, 294–333, 336–373, 376–415, 416–455, 461–498, and 501–539; these read GHEDHVITCMQIHDDVLVTGSDDNTLKVWCIDKGEVMYT, GHTGGVWTSQISQCGRYIVSGSTDRTVKVWSTVDGSLLHT, GHTSTVRCMAMAGSILVTGSRDTTLRVWDVESGRHLAT, GHHAAVRCVQFDGTTVVSGGYDFTVKIWNAHTGRCIRTLT, GHNNRVYSLLFESERSIVCSGSLDTSIRVWDFTRPEGQEC, GHTSLTSGMQLRGNILVSCNADSHVRVWDIHEGTCVHM, and GHRSAITSLQWFGRNMVATSSDDGTVKLWDIERGALIRD.

Probable component of the SCF(sel-10) E3 ubiquitin-protein ligase complex which includes skr-1 and F-box domain-containing protein sel-10 as a substrate recognition component. Interacts with fem-1, fem-2, and fem-3. Interacts with the intracellular domain of glp-1 and sel-12. Interacts with lin-12. Interacts with skr-1. Interacts with zyg-1. Expressed in tail and head neurons.

The protein resides in the cell projection. It localises to the axon. The protein localises to the cytoplasm. In terms of biological role, probable substrate recognition component of SCF (SKP1-CUL-F-box protein) E3 ubiquitin-protein ligase complex, which mediates the ubiquitination and subsequent proteasomal degradation of target proteins. Regulates synapse elimination in early development in the motor neuron HSNL. Cell autonomous negative regulator of lin-12/Notch-mediated signaling, with respect to lin-12 activity in cell fate decisions and tumorigenesis. May target the intracellular domains of lin-12/Notch proteins for ubiquitin-dependent degradation. Involved in sex determination by promoting female development. Potential regulator of presenilin. May have a role in egg laying. Regulates zyg-1 levels (possibly redundantly with lin-23) to control centrosome duplication during mitosis. Negatively regulates lin-45 activity and protein stability, probably by targeting it for ubiquitination and proteasomal degradation. This Caenorhabditis elegans protein is F-box/WD repeat-containing protein sel-10.